The primary structure comprises 321 residues: Ribosomal RNA small subunit methyltransferase H (321 aa).

S-adenosyl-L-methionine is bound by residues 40–42 (GGH), Asp-60, Phe-84, Asp-106, and Gln-113.

The protein belongs to the methyltransferase superfamily. RsmH family.

The protein localises to the cytoplasm. The enzyme catalyses cytidine(1402) in 16S rRNA + S-adenosyl-L-methionine = N(4)-methylcytidine(1402) in 16S rRNA + S-adenosyl-L-homocysteine + H(+). Its function is as follows. Specifically methylates the N4 position of cytidine in position 1402 (C1402) of 16S rRNA. This chain is Ribosomal RNA small subunit methyltransferase H, found in Haemophilus influenzae (strain PittEE).